An 80-amino-acid chain; its full sequence is Conotoxin Cl9.5 (80 aa).

The N-terminal stretch at 1-23 (MNCYLILTVALLLTSAMTGTTTA) is a signal peptide. Residues 24-37 (GQLNTKGVTLREDD) constitute a propeptide that is removed on maturation. 3 disulfides stabilise this stretch: Cys-42–Cys-59, Cys-47–Cys-69, and Cys-49–Cys-74.

Expressed by the venom duct.

It localises to the secreted. The chain is Conotoxin Cl9.5 from Californiconus californicus (California cone).